The sequence spans 428 residues: Serine--tRNA ligase (428 aa).

Position 231–233 (231–233) interacts with L-serine; that stretch reads TAE. 262–264 provides a ligand contact to ATP; the sequence is RSE. An L-serine-binding site is contributed by Glu285. An ATP-binding site is contributed by 349–352; it reads EISS. Ser385 is an L-serine binding site.

The protein belongs to the class-II aminoacyl-tRNA synthetase family. Type-1 seryl-tRNA synthetase subfamily. In terms of assembly, homodimer. The tRNA molecule binds across the dimer.

The protein resides in the cytoplasm. It catalyses the reaction tRNA(Ser) + L-serine + ATP = L-seryl-tRNA(Ser) + AMP + diphosphate + H(+). The catalysed reaction is tRNA(Sec) + L-serine + ATP = L-seryl-tRNA(Sec) + AMP + diphosphate + H(+). It participates in aminoacyl-tRNA biosynthesis; selenocysteinyl-tRNA(Sec) biosynthesis; L-seryl-tRNA(Sec) from L-serine and tRNA(Sec): step 1/1. Functionally, catalyzes the attachment of serine to tRNA(Ser). Is also able to aminoacylate tRNA(Sec) with serine, to form the misacylated tRNA L-seryl-tRNA(Sec), which will be further converted into selenocysteinyl-tRNA(Sec). In Staphylococcus aureus (strain MRSA252), this protein is Serine--tRNA ligase.